Here is a 76-residue protein sequence, read N- to C-terminus: Small, acid-soluble spore protein Tlp (76 aa).

3 stretches are compositionally biased toward basic and acidic residues: residues 1–15 (MAKR…ERIE), 26–38 (DEAR…HSEE), and 46–76 (EIEQ…KNNS). A disordered region spans residues 1–76 (MAKRDDRSNN…DEVNDQKNNS (76 aa)).

It belongs to the Tlp family.

The protein localises to the spore core. In Shouchella clausii (strain KSM-K16) (Alkalihalobacillus clausii), this protein is Small, acid-soluble spore protein Tlp.